Here is a 385-residue protein sequence, read N- to C-terminus: Alanine--glyoxylate aminotransferase 1 (385 aa).

Lys201 is subject to N6-(pyridoxal phosphate)lysine. Arg354 contacts substrate.

The protein belongs to the class-V pyridoxal-phosphate-dependent aminotransferase family. Homodimer. It depends on pyridoxal 5'-phosphate as a cofactor.

The enzyme catalyses glyoxylate + L-alanine = glycine + pyruvate. It functions in the pathway amino-acid biosynthesis; glycine biosynthesis; glycine from glyoxylate: step 1/1. Its function is as follows. Has alanine:glyoxylate aminotransferase activity. In Saccharomyces cerevisiae (strain ATCC 204508 / S288c) (Baker's yeast), this protein is Alanine--glyoxylate aminotransferase 1.